The sequence spans 113 residues: MASGQEKRSELDARAKQGETVVPGGTGGKSLEAQEHLAEGRSKGGHTRKEQLGTEGYQEIGTKGGETRREQMGKEGYEQMGRMGGLATKDKSGAERAEEEGIDIDQSKFRTKS.

Basic and acidic residues-rich tracts occupy residues 1–17 (MASG…RAKQ), 32–52 (EAQE…KEQL), and 65–77 (GETR…KEGY). The disordered stretch occupies residues 1–113 (MASGQEKRSE…IDQSKFRTKS (113 aa)).

Belongs to the small hydrophilic plant seed protein family. In terms of tissue distribution, expressed in embryogenic cells, somatic embryos and seeds at the later stages of development. Not detected in leaves.

This chain is Carrot ABA-induced in somatic embryos 3, found in Daucus carota (Wild carrot).